A 237-amino-acid polypeptide reads, in one-letter code: MQQSKEERVHDVFEKISDKYDVMNSVISFQRHKAWRKETMRIMDVKPGSKALDVCCGTADWTIALAGAVGEDGKVYGLDFSENMLAVGKQKVEALELKQVELIHGNAMELPYEDNTFDYVTIGFGLRNVPDYMQVLKEMTRVVKPGGKVICLETSQPTMIGFRQGYVLYFKYIMPLFGKMFAKSYKEYSWLQESASTFPGMKELACMFEEAGLKNVQVKPFTFGVAAMHLGIKPESK.

S-adenosyl-L-methionine is bound by residues Thr-58, Asp-79, and 106–107 (NA).

Belongs to the class I-like SAM-binding methyltransferase superfamily. MenG/UbiE family.

The catalysed reaction is a 2-demethylmenaquinol + S-adenosyl-L-methionine = a menaquinol + S-adenosyl-L-homocysteine + H(+). It participates in quinol/quinone metabolism; menaquinone biosynthesis; menaquinol from 1,4-dihydroxy-2-naphthoate: step 2/2. Its function is as follows. Methyltransferase required for the conversion of demethylmenaquinol (DMKH2) to menaquinol (MKH2). This is Demethylmenaquinone methyltransferase from Bacillus mycoides (strain KBAB4) (Bacillus weihenstephanensis).